We begin with the raw amino-acid sequence, 950 residues long: Bifunctional glutamine synthetase adenylyltransferase/adenylyl-removing enzyme (950 aa).

The adenylyl removase stretch occupies residues 1-443; that stretch reads MSLPSPLLPV…VFVTLIGDEE (443 aa). The segment at 450-950 is adenylyl transferase; the sequence is ERHFNELWDM…WQEWLESSTI (501 aa).

The protein belongs to the GlnE family. The cofactor is Mg(2+).

The catalysed reaction is [glutamine synthetase]-O(4)-(5'-adenylyl)-L-tyrosine + phosphate = [glutamine synthetase]-L-tyrosine + ADP. It carries out the reaction [glutamine synthetase]-L-tyrosine + ATP = [glutamine synthetase]-O(4)-(5'-adenylyl)-L-tyrosine + diphosphate. Involved in the regulation of glutamine synthetase GlnA, a key enzyme in the process to assimilate ammonia. When cellular nitrogen levels are high, the C-terminal adenylyl transferase (AT) inactivates GlnA by covalent transfer of an adenylyl group from ATP to specific tyrosine residue of GlnA, thus reducing its activity. Conversely, when nitrogen levels are low, the N-terminal adenylyl removase (AR) activates GlnA by removing the adenylyl group by phosphorolysis, increasing its activity. The regulatory region of GlnE binds the signal transduction protein PII (GlnB) which indicates the nitrogen status of the cell. This is Bifunctional glutamine synthetase adenylyltransferase/adenylyl-removing enzyme from Vibrio vulnificus (strain YJ016).